The following is a 357-amino-acid chain: Holliday junction branch migration complex subunit RuvB (357 aa).

The segment at 1–27 is disordered; the sequence is MGRFSNADGPGDDADEREVTPALTVGE. Positions 1-195 are large ATPase domain (RuvB-L); the sequence is MGRFSNADGP…FGFTAHMDFY (195 aa). ATP is bound by residues L34, R35, G76, K79, T80, S81, 142 to 144, R185, Y195, and R232; that span reads EDF. T80 lines the Mg(2+) pocket. The small ATPAse domain (RuvB-S) stretch occupies residues 196–266; sequence EPAELERVLA…IAKYALEVYD (71 aa). A head domain (RuvB-H) region spans residues 269-357; that stretch reads ELGLDRLDRA…GGLGQVGLFE (89 aa). Positions 324 and 329 each coordinate DNA.

The protein belongs to the RuvB family. In terms of assembly, homohexamer. Forms an RuvA(8)-RuvB(12)-Holliday junction (HJ) complex. HJ DNA is sandwiched between 2 RuvA tetramers; dsDNA enters through RuvA and exits via RuvB. An RuvB hexamer assembles on each DNA strand where it exits the tetramer. Each RuvB hexamer is contacted by two RuvA subunits (via domain III) on 2 adjacent RuvB subunits; this complex drives branch migration. In the full resolvosome a probable DNA-RuvA(4)-RuvB(12)-RuvC(2) complex forms which resolves the HJ.

Its subcellular location is the cytoplasm. It carries out the reaction ATP + H2O = ADP + phosphate + H(+). Functionally, the RuvA-RuvB-RuvC complex processes Holliday junction (HJ) DNA during genetic recombination and DNA repair, while the RuvA-RuvB complex plays an important role in the rescue of blocked DNA replication forks via replication fork reversal (RFR). RuvA specifically binds to HJ cruciform DNA, conferring on it an open structure. The RuvB hexamer acts as an ATP-dependent pump, pulling dsDNA into and through the RuvAB complex. RuvB forms 2 homohexamers on either side of HJ DNA bound by 1 or 2 RuvA tetramers; 4 subunits per hexamer contact DNA at a time. Coordinated motions by a converter formed by DNA-disengaged RuvB subunits stimulates ATP hydrolysis and nucleotide exchange. Immobilization of the converter enables RuvB to convert the ATP-contained energy into a lever motion, pulling 2 nucleotides of DNA out of the RuvA tetramer per ATP hydrolyzed, thus driving DNA branch migration. The RuvB motors rotate together with the DNA substrate, which together with the progressing nucleotide cycle form the mechanistic basis for DNA recombination by continuous HJ branch migration. Branch migration allows RuvC to scan DNA until it finds its consensus sequence, where it cleaves and resolves cruciform DNA. The polypeptide is Holliday junction branch migration complex subunit RuvB (Mycolicibacterium gilvum (strain PYR-GCK) (Mycobacterium gilvum (strain PYR-GCK))).